We begin with the raw amino-acid sequence, 319 residues long: Acetyl-coenzyme A carboxylase carboxyl transferase subunit alpha (319 aa).

Residues 35 to 296 (NLDEEVQRLR…KAQLLADLLD (262 aa)) form the CoA carboxyltransferase C-terminal domain.

This sequence belongs to the AccA family. Acetyl-CoA carboxylase is a heterohexamer composed of biotin carboxyl carrier protein (AccB), biotin carboxylase (AccC) and two subunits each of ACCase subunit alpha (AccA) and ACCase subunit beta (AccD).

The protein resides in the cytoplasm. It carries out the reaction N(6)-carboxybiotinyl-L-lysyl-[protein] + acetyl-CoA = N(6)-biotinyl-L-lysyl-[protein] + malonyl-CoA. The protein operates within lipid metabolism; malonyl-CoA biosynthesis; malonyl-CoA from acetyl-CoA: step 1/1. In terms of biological role, component of the acetyl coenzyme A carboxylase (ACC) complex. First, biotin carboxylase catalyzes the carboxylation of biotin on its carrier protein (BCCP) and then the CO(2) group is transferred by the carboxyltransferase to acetyl-CoA to form malonyl-CoA. This chain is Acetyl-coenzyme A carboxylase carboxyl transferase subunit alpha, found in Pectobacterium atrosepticum (strain SCRI 1043 / ATCC BAA-672) (Erwinia carotovora subsp. atroseptica).